We begin with the raw amino-acid sequence, 248 residues long: Proteasome subunit alpha type-7 (248 aa).

The O-linked (GlcNAc) serine glycan is linked to Ser-130. Tyr-153 bears the Phosphotyrosine mark.

This sequence belongs to the peptidase T1A family. As to quaternary structure, the 26S proteasome consists of a 20S proteasome core and two 19S regulatory subunits. The 20S proteasome core is a barrel-shaped complex made of 28 subunits that are arranged in four stacked rings. The two outer rings are each formed by seven alpha subunits, and the two inner rings are formed by seven beta subunits. The proteolytic activity is exerted by three beta-subunits PSMB5, PSMB6 and PSMB7. PSMA7 interacts directly with the PSMG1-PSMG2 heterodimer which promotes 20S proteasome assembly. Interacts with HIF1A. Interacts with RAB7A. Interacts with PRKN. Interacts with ABL1 and ABL2. Interacts with EMAP2. Interacts with MAVS.

The protein localises to the cytoplasm. The protein resides in the nucleus. In terms of biological role, component of the 20S core proteasome complex involved in the proteolytic degradation of most intracellular proteins. This complex plays numerous essential roles within the cell by associating with different regulatory particles. Associated with two 19S regulatory particles, forms the 26S proteasome and thus participates in the ATP-dependent degradation of ubiquitinated proteins. The 26S proteasome plays a key role in the maintenance of protein homeostasis by removing misfolded or damaged proteins that could impair cellular functions, and by removing proteins whose functions are no longer required. Associated with the PA200 or PA28, the 20S proteasome mediates ubiquitin-independent protein degradation. This type of proteolysis is required in several pathways including spermatogenesis (20S-PA200 complex) or generation of a subset of MHC class I-presented antigenic peptides (20S-PA28 complex). Inhibits the transactivation function of HIF-1A under both normoxic and hypoxia-mimicking conditions. The interaction with EMAP2 increases the proteasome-mediated HIF-1A degradation under the hypoxic conditions. Plays a role in hepatitis C virus internal ribosome entry site-mediated translation. Mediates nuclear translocation of the androgen receptor (AR) and thereby enhances androgen-mediated transactivation. Promotes MAVS degradation and thereby negatively regulates MAVS-mediated innate immune response. In Pongo abelii (Sumatran orangutan), this protein is Proteasome subunit alpha type-7 (PSMA7).